The following is a 413-amino-acid chain: MAEGPEEARGHPPGQDDGGGDHEPVPSLRGPPTTAVPCPRDDPQAEPQAPGRPTAPGLAAAAAADKLEPPRELRKRGEAASGSGAELQEQAGCEAPEAAAPRERPARLSAREYSRQVHEWLWQSYCGYLTWHSGLAAFPAYCSPQPSPQSFPSGGAAVPQAAAPPPPQLGYYNPFYFLSPGAAGPDPRTAAGISTPAPVAGLGPRAPHVQASVRATPVTRVGSAAPSRSPSETGRQAGREYVIPSLAHRFMAEMVDFFILFFIKATIVLSIMHLSGIKDISKFAMHYIIEEIDEDTSMEDLQKMMVVALIYRLLVCFYEIICIWGAGGATPGKFLLGLRVVTCDTSVLIAPSRVLVIPSSNVSITTSTIRALIKNFSIASFFPAFITLLFFQHNRTAYDIVAGTIVVKRNGVR.

Positions 1–10 (MAEGPEEARG) are enriched in basic and acidic residues. A disordered region spans residues 1–105 (MAEGPEEARG…PEAAAPRERP (105 aa)). A compositionally biased stretch (low complexity) spans 49 to 64 (APGRPTAPGLAAAAAA). Positions 65–78 (DKLEPPRELRKRGE) are enriched in basic and acidic residues. The necessary and sufficient to interact with SYVN1 stretch occupies residues 107 to 139 (RLSAREYSRQVHEWLWQSYCGYLTWHSGLAAFP). The interval 217–236 (PVTRVGSAAPSRSPSETGRQ) is disordered. S229 carries the post-translational modification Phosphoserine. The RDD domain maps to 242–408 (VIPSLAHRFM…DIVAGTIVVK (167 aa)). The next 3 membrane-spanning stretches (helical) occupy residues 257–277 (FFIL…LSGI), 304–324 (MMVV…ICIW), and 371–391 (ALIK…LLFF).

In terms of assembly, component of the HRD1 complex, which comprises at least SYNV1/HRD1, FAM8A1, HERPUD1/HERP, OS9, SEL1L and UBE2J1. This interaction stabilizes FAM8A1 protein, preventing its proteasomal degradation. FAM8A1 binding to SYNV1 may promote recruitment of HERPUD1 to the HRD1 complex. As to expression, ubiquitously expressed, with a higher level of expression in testis.

The protein localises to the membrane. Its function is as follows. Plays a role in the assembly of the HRD1 complex, a complex involved in the ubiquitin-proteasome-dependent process of ER-associated degradation (ERAD). This chain is Protein FAM8A1 (FAM8A1), found in Homo sapiens (Human).